Consider the following 816-residue polypeptide: Probable E3 ubiquitin-protein ligase hulA (816 aa).

Residues 1–112 form the C2 domain; it reads MGSNLPAQPN…QMGGDEMLTR (112 aa). 2 disordered regions span residues 134-238 and 253-353; these read NLST…WERR and RTTT…YFVD. 4 stretches are compositionally biased toward polar residues: residues 151-168, 177-202, 217-226, and 253-270; these read MQPS…ASTP, ADPT…STIV, SRTNLSSFED, and RTTT…QTSR. One can recognise a WW 1 domain in the interval 229–262; the sequence is GRLPAGWERREDNLGRTYYVDHNTRTTTWTRPSN. The segment covering 279-294 has biased composition (basic and acidic residues); that stretch reads LERRAHQSRMLPEDRT. The span at 295–309 shows a compositional bias: polar residues; sequence GASSPNLQENQQQAQ. Positions 310 to 333 are enriched in low complexity; it reads TPPAGGSASAVSMMATGATTAGTG. WW domains lie at 333–366 and 393–426; these read GELP…DPRR and GPLP…DPRL. The 335-residue stretch at 482–816 folds into the HECT domain; that stretch reads SASDLKKRLM…VEETLGFGQE (335 aa). Cysteine 784 functions as the Glycyl thioester intermediate in the catalytic mechanism.

It belongs to the RSP5/NEDD4 family. In terms of assembly, interacts with creD.

It localises to the cytoplasm. The catalysed reaction is S-ubiquitinyl-[E2 ubiquitin-conjugating enzyme]-L-cysteine + [acceptor protein]-L-lysine = [E2 ubiquitin-conjugating enzyme]-L-cysteine + N(6)-ubiquitinyl-[acceptor protein]-L-lysine.. The protein operates within protein modification; protein ubiquitination. In terms of biological role, E3 ubiquitin-protein ligase which accepts ubiquitin from an E2 ubiquitin-conjugating enzyme in the form of a thioester and then directly transfers the ubiquitin to targeted substrates. Probably involved in the regulatory network controlling carbon source utilization. The chain is Probable E3 ubiquitin-protein ligase hulA (hulA) from Aspergillus oryzae (strain ATCC 42149 / RIB 40) (Yellow koji mold).